A 260-amino-acid polypeptide reads, in one-letter code: Snake venom serine protease homolog (260 aa).

Positions 1–18 are cleaved as a signal peptide; that stretch reads MVLVRVLANLLMLQLSYA. Positions 19–24 are excised as a propeptide; it reads QKSSEL. The Peptidase S1 domain maps to 25 to 251; that stretch reads IIGGDECNIN…HLNWIQSIIA (227 aa). Cystine bridges form between C31-C165, C52-C68, C100-C258, C144-C212, C176-C191, and C202-C227. 2 N-linked (GlcNAc...) asparagine glycosylation sites follow: N123 and N124. N253 carries N-linked (GlcNAc...) asparagine glycosylation.

It belongs to the peptidase S1 family. Snake venom subfamily. In terms of tissue distribution, expressed by the venom gland.

Its subcellular location is the secreted. Functionally, snake venom serine protease homolog that may act in the hemostasis system of the prey. This is Snake venom serine protease homolog from Protobothrops jerdonii (Jerdon's pitviper).